A 282-amino-acid polypeptide reads, in one-letter code: Glutamyl endopeptidase (282 aa).

An N-terminal signal peptide occupies residues 1–27; that stretch reads MKKRFLSICTMTIAALATTTMVNTSYA. The propeptide occupies 28-66; it reads KTDTESHNHSSLGTENKNVLDINSSSHNIKPSQNKSYPS. Catalysis depends on charge relay system residues His117, Asp159, and Ser235.

This sequence belongs to the peptidase S1B family.

It localises to the secreted. It catalyses the reaction Preferential cleavage: Glu-|-Xaa, Asp-|-Xaa.. Functionally, exhibits a significant hydrolytic activity for the carbonyl side of glutamic acid. Shows activity toward human fibronectin and type 1 collagen. This is Glutamyl endopeptidase (gseA) from Staphylococcus epidermidis (strain ATCC 35984 / DSM 28319 / BCRC 17069 / CCUG 31568 / BM 3577 / RP62A).